Reading from the N-terminus, the 427-residue chain is Glutamate-1-semialdehyde 2,1-aminomutase (427 aa).

Lysine 267 is modified (N6-(pyridoxal phosphate)lysine).

This sequence belongs to the class-III pyridoxal-phosphate-dependent aminotransferase family. HemL subfamily. Homodimer. It depends on pyridoxal 5'-phosphate as a cofactor.

Its subcellular location is the cytoplasm. The enzyme catalyses (S)-4-amino-5-oxopentanoate = 5-aminolevulinate. It functions in the pathway porphyrin-containing compound metabolism; protoporphyrin-IX biosynthesis; 5-aminolevulinate from L-glutamyl-tRNA(Glu): step 2/2. This is Glutamate-1-semialdehyde 2,1-aminomutase from Thermodesulfovibrio yellowstonii (strain ATCC 51303 / DSM 11347 / YP87).